Reading from the N-terminus, the 588-residue chain is Acid beta-fructofuranosidase 1, vacuolar (588 aa).

Residues 1 to 31 (MDTSTSAYAPLPGEDPLFSGHPPASLRRSWK) are Cytoplasmic-facing. Residues 1–115 (MDTSTSAYAP…LSYNWTNAMF (115 aa)) constitute a propeptide, removed in mature form. A helical; Signal-anchor for type II membrane protein transmembrane segment spans residues 32–52 (GFAVIFASVLFLLSLVGLIIH). Residues 53-588 (QGPQQPPDVM…LRALRKEVGR (536 aa)) are Lumenal-facing. A disordered region spans residues 57–86 (QPPDVMPDKQDEHHHPQSTTPASETTASWE). Residues 62 to 71 (MPDKQDEHHH) are compositionally biased toward basic and acidic residues. Residues 73–84 (QSTTPASETTAS) are compositionally biased toward polar residues. Substrate-binding positions include 130–133 (WMND), Q149, and W157. D133 is an active-site residue. N159 is a glycosylation site (N-linked (GlcNAc...) asparagine). Residue 192 to 193 (WS) participates in substrate binding. N226 carries N-linked (GlcNAc...) asparagine glycosylation. Residues 256–257 (RD), E311, and D344 contribute to the substrate site. A disulfide bond links C499 and C545.

Belongs to the glycosyl hydrolase 32 family. As to quaternary structure, monomer. May be present in two forms, a 70 kDa monomer and a heterodimer of the 30 kDa and 38 kDa subunits. The ratio of the levels of the two forms within cells appears to be regulated developmentally. Glycosylated. As to expression, expressed in buds, stems, roots and leaves. Expressed in the epidermal cells of young leaves and of primordial leaves.

The protein resides in the membrane. It localises to the vacuole lumen. It catalyses the reaction Hydrolysis of terminal non-reducing beta-D-fructofuranoside residues in beta-D-fructofuranosides.. Functionally, acidic vacuolar invertase involved in light-induced bud burst. The protein is Acid beta-fructofuranosidase 1, vacuolar of Rosa hybrid cultivar.